A 374-amino-acid chain; its full sequence is Phosphomevalonate kinase (374 aa).

It belongs to the GHMP kinase family. Homodimer. Requires Mg(2+) as cofactor.

It catalyses the reaction (R)-5-phosphomevalonate + ATP = (R)-5-diphosphomevalonate + ADP. The protein operates within isoprenoid biosynthesis; isopentenyl diphosphate biosynthesis via mevalonate pathway; isopentenyl diphosphate from (R)-mevalonate: step 2/3. Functionally, catalyzes the phosphorylation of (R)-mevalonate 5-phosphate (MVAP) to (R)-mevalonate 5-diphosphate (MVAPP). Functions in the mevalonate (MVA) pathway leading to isopentenyl diphosphate (IPP), a key precursor for the biosynthesis of isoprenoid compounds. This Streptomyces sp. (strain CL190) protein is Phosphomevalonate kinase.